The following is a 351-amino-acid chain: MQTYGNPDVTYGWWVGNSVVTNRAGRFIGSHIGHTGLICFAAGGSTLWELARYNPEIPMGHQSSIFLAHLASLGLGFDEAGVWTGAGVATIAIFHLIFSAVYGTAGLAHSLLFDPDLKDGPIPTTKKFKLEWDNPDNLTFILGHHLIFFGVANIWFVEWARWHGIYDPAIGEIRTIFPGYGDFGMVYGHQFDFLTIDSLEEVMSGHAFLAFVQISGGAWHIATKQLGEYTEFKGKGLLSAEAVLSWSLAGIGWMAIVAAFWCAQNTTVYPIDWYGEPLALKFGISPYWVDTGDVSDSTAFLGHTTRAALSNVHYYFGFFFIQGHIWHALRAMGFDFRRVVGSVASLATTES.

6 consecutive transmembrane segments (helical) span residues 27–47, 81–101, 140–160, 202–222, 242–262, and 309–329; these read FIGSHIGHTGLICFAAGGSTL, GVWTGAGVATIAIFHLIFSAV, FILGHHLIFFGVANIWFVEWA, VMSGHAFLAFVQISGGAWHIA, AVLSWSLAGIGWMAIVAAFWC, and LSNVHYYFGFFFIQGHIWHAL.

This sequence belongs to the PsbB/PsbC family. IsiA/Pcb subfamily. As to quaternary structure, the antenna complex consists of divinyl chlorophylls (a and b) and divinyl chlorophyll a/b binding proteins and binds more divinyl chlorophyll b than does the antenna complex from high-light-adapted Prochlorococcus. It depends on divinyl chlorophyll a as a cofactor. Divinyl chlorophyll b serves as cofactor.

The protein localises to the cellular thylakoid membrane. The antenna complex functions as a light receptor, it captures and delivers excitation energy to photosystems II and I. The Prochlorales pcb genes are not related to higher plant LHCs. In Prochlorococcus marinus (strain NATL2A), this protein is Divinyl chlorophyll a/b light-harvesting protein PcbC (pcbC).